The sequence spans 868 residues: Paladin (868 aa).

Glycine 2 carries N-myristoyl glycine lipidation.

This sequence belongs to the paladin family.

The protein resides in the cytoplasm. It is found in the cytosol. In Gallus gallus (Chicken), this protein is Paladin (PALD1).